The sequence spans 363 residues: Phosphoserine aminotransferase (363 aa).

L-glutamate is bound at residue Arg-42. Residues 76 to 77, Trp-102, Thr-156, Asp-175, and Gln-198 each bind pyridoxal 5'-phosphate; that span reads GR. An N6-(pyridoxal phosphate)lysine modification is found at Lys-199. 240-241 contacts pyridoxal 5'-phosphate; the sequence is NT.

It belongs to the class-V pyridoxal-phosphate-dependent aminotransferase family. SerC subfamily. Homodimer. Pyridoxal 5'-phosphate is required as a cofactor.

It localises to the cytoplasm. The enzyme catalyses O-phospho-L-serine + 2-oxoglutarate = 3-phosphooxypyruvate + L-glutamate. The catalysed reaction is 4-(phosphooxy)-L-threonine + 2-oxoglutarate = (R)-3-hydroxy-2-oxo-4-phosphooxybutanoate + L-glutamate. The protein operates within amino-acid biosynthesis; L-serine biosynthesis; L-serine from 3-phospho-D-glycerate: step 2/3. It participates in cofactor biosynthesis; pyridoxine 5'-phosphate biosynthesis; pyridoxine 5'-phosphate from D-erythrose 4-phosphate: step 3/5. Functionally, catalyzes the reversible conversion of 3-phosphohydroxypyruvate to phosphoserine and of 3-hydroxy-2-oxo-4-phosphonooxybutanoate to phosphohydroxythreonine. The polypeptide is Phosphoserine aminotransferase (Shewanella denitrificans (strain OS217 / ATCC BAA-1090 / DSM 15013)).